Here is a 508-residue protein sequence, read N- to C-terminus: MGLPWYRVHTVVLNDPGRLISVHIMHTALVAGWAGSMALYELAVFDPSDPVLDPMWRQGMFVIPFMTRLGITNSWGGWSITGGTVTDPGIWSYEGVAGSHIVFSGLCFLAAIWHWVYWDLEIFCDERTGKPSLDLPKIFGIHLFLSGVACFGFGAFHVTGLYGPGIWVSDPYGLTGKVQSVNPAWGVEGFDPFVPGGIASHHIAAGTLGILAGLFHLSVRPPQRLYKGLRMGNIETVLSSSIAAVFFAAFVVAGTMWYGSATTPIELFGPTRYQWDQGYFQQEIYRRVSAGLAENQSLSEAWSKIPEKLAFYDYIGNNPAKGGLFRAGSMDNGDGIAVGWLGHPIFRDKEGRELFVRRMPTFFETFPVVLIDGDGIVRADVPFRRAESKYSVEQVGVTVEFYGGELNGVSYSDPATVKKYARRAQLGEIFELDRATLKSDGVFRSSPRGWFTFGHASFALLFFFGHIWHGSRTLFRDVFAGIDPDLDSQVEFGAFQKLGDPTTRRQAV.

6 helical membrane passes run 21–36 (SVHI…WAGS), 101–115 (IVFS…IWHW), 140–156 (GIHL…FGAF), 203–218 (IAAG…FHLS), 237–252 (VLSS…AFVV), and 457–472 (SFAL…HGSR).

It belongs to the PsbB/PsbC family. PsbB subfamily. As to quaternary structure, PSII is composed of 1 copy each of membrane proteins PsbA, PsbB, PsbC, PsbD, PsbE, PsbF, PsbH, PsbI, PsbJ, PsbK, PsbL, PsbM, PsbT, PsbX, PsbY, PsbZ, Psb30/Ycf12, at least 3 peripheral proteins of the oxygen-evolving complex and a large number of cofactors. It forms dimeric complexes. The cofactor is Binds multiple chlorophylls. PSII binds additional chlorophylls, carotenoids and specific lipids..

Its subcellular location is the plastid. It is found in the chloroplast thylakoid membrane. One of the components of the core complex of photosystem II (PSII). It binds chlorophyll and helps catalyze the primary light-induced photochemical processes of PSII. PSII is a light-driven water:plastoquinone oxidoreductase, using light energy to abstract electrons from H(2)O, generating O(2) and a proton gradient subsequently used for ATP formation. In Fagopyrum esculentum subsp. ancestrale (Wild buckwheat), this protein is Photosystem II CP47 reaction center protein.